A 234-amino-acid chain; its full sequence is Endonuclease NucS (234 aa).

The protein belongs to the NucS endonuclease family.

The protein localises to the cytoplasm. In terms of biological role, cleaves both 3' and 5' ssDNA extremities of branched DNA structures. This Bifidobacterium adolescentis (strain ATCC 15703 / DSM 20083 / NCTC 11814 / E194a) protein is Endonuclease NucS.